The chain runs to 433 residues: G-protein coupled receptor 22 (433 aa).

At 1-45 (MCFSPILEINMQSESNITVRDDIDDINTNMYQPLSYPLSFQVSLT) the chain is on the extracellular side. Asparagine 16 is a glycosylation site (N-linked (GlcNAc...) asparagine). Residues 46 to 66 (GFLMLEIVLGLGSNLTVLVLY) form a helical membrane-spanning segment. At 67–85 (CMKSNLINSVSNIITMNLH) the chain is on the cytoplasmic side. Residues 86–106 (VLDVIICVGCIPLTIVILLLS) traverse the membrane as a helical segment. The Extracellular segment spans residues 107–115 (LESNTALIC). The chain crosses the membrane as a helical span at residues 116-136 (CFHEACVSFASVSTAINVFAI). The Cytoplasmic portion of the chain corresponds to 137-156 (TLDRYDISVKPANRILTMGR). The chain crosses the membrane as a helical span at residues 157-177 (AVMLMISIWIFSFFSFLIPFI). The Extracellular segment spans residues 178-208 (EVNFFSLQSGNTWENKTLLCVSTNEYYTELG). N-linked (GlcNAc...) asparagine glycosylation occurs at asparagine 192. A helical transmembrane segment spans residues 209 to 229 (MYYHLLVQIPIFFFTVVVMLI). Topologically, residues 230-315 (TYTKILQALN…ERQKRVFRMS (86 aa)) are cytoplasmic. The chain crosses the membrane as a helical span at residues 316–336 (LLIISTFLLCWTPISVLNTTI). Residues 337 to 349 (LCLGPSDLLVKLR) are Extracellular-facing. Residues 350 to 370 (LCFLVMAYGTTIFHPLLYAFT) traverse the membrane as a helical segment. Residues 371 to 433 (RQKFQKVLKS…KCLVPQVVTD (63 aa)) are Cytoplasmic-facing.

This sequence belongs to the G-protein coupled receptor 1 family. As to expression, high expression in adult and fetal heart tissue. Expressed in the brain, with enrichment in the accumbens, amygdala, cerebellum, cortex, and hippocampus regions.

It is found in the cell membrane. Functionally, orphan G-protein coupled receptor. Seems to act through a G(i)/G(o) mediated pathway. May be involved in ciliogenesis. The polypeptide is G-protein coupled receptor 22 (Homo sapiens (Human)).